A 230-amino-acid chain; its full sequence is MENQPKLNSSKEVIAFLAERFPQCFSAEGEARPLKIGIFQDLVERVEGEMNLSKTQLRSALRLYTSSWRYLYGIKPGATRVDLDGNPCGVLEEQHVEHARKQLEEAKARVQAQRAEQQAKKREAAGAEGEENGAERRERKPRPAPRRKDNAERKPRAAKPAAAAKPSRPAREERHTPVSDITALSVGQAIKVKAGNNAMDATVQEITKDGVRVQLTSGMSMIVRAEHLVF.

The disordered stretch occupies residues A106 to I181. Residues R146–P155 show a composition bias toward basic and acidic residues. Residues A158–S167 are compositionally biased toward low complexity.

Belongs to the ProQ family.

The protein localises to the cytoplasm. In terms of biological role, RNA chaperone with significant RNA binding, RNA strand exchange and RNA duplexing activities. May regulate ProP activity through an RNA-based, post-transcriptional mechanism. In Cronobacter sakazakii (strain ATCC BAA-894) (Enterobacter sakazakii), this protein is RNA chaperone ProQ.